A 153-amino-acid chain; its full sequence is 3-hydroxyacyl-[acyl-carrier-protein] dehydratase FabZ (153 aa).

His59 is a catalytic residue.

Belongs to the thioester dehydratase family. FabZ subfamily.

The protein resides in the cytoplasm. The enzyme catalyses a (3R)-hydroxyacyl-[ACP] = a (2E)-enoyl-[ACP] + H2O. Involved in unsaturated fatty acids biosynthesis. Catalyzes the dehydration of short chain beta-hydroxyacyl-ACPs and long chain saturated and unsaturated beta-hydroxyacyl-ACPs. The protein is 3-hydroxyacyl-[acyl-carrier-protein] dehydratase FabZ of Thermosynechococcus vestitus (strain NIES-2133 / IAM M-273 / BP-1).